The sequence spans 127 residues: Aspartate 1-decarboxylase (127 aa).

The active-site Schiff-base intermediate with substrate; via pyruvic acid is S25. Residue S25 is modified to Pyruvic acid (Ser). T57 lines the substrate pocket. Catalysis depends on Y58, which acts as the Proton donor. Residue G73 to A75 coordinates substrate.

This sequence belongs to the PanD family. In terms of assembly, heterooctamer of four alpha and four beta subunits. Pyruvate is required as a cofactor. Post-translationally, is synthesized initially as an inactive proenzyme, which is activated by self-cleavage at a specific serine bond to produce a beta-subunit with a hydroxyl group at its C-terminus and an alpha-subunit with a pyruvoyl group at its N-terminus.

The protein resides in the cytoplasm. The enzyme catalyses L-aspartate + H(+) = beta-alanine + CO2. The protein operates within cofactor biosynthesis; (R)-pantothenate biosynthesis; beta-alanine from L-aspartate: step 1/1. Its function is as follows. Catalyzes the pyruvoyl-dependent decarboxylation of aspartate to produce beta-alanine. The protein is Aspartate 1-decarboxylase of Geobacillus sp. (strain WCH70).